The sequence spans 235 residues: MKVIVVKNQLEGGKIGLDLLKESINNGAKTLGLATGSTPVEFYNQIVNSDLDFTNMVSVNLDEYVGLDGSNEQSYRYFMTKHLFGEKPFKENFLPNGKATDLEAEAKHYDQIIEENPIDWQILGIGQNGHIGFNEPGTPAEITTHVVDLQESTIKANARFFESEADVPRKAISMGLASIMKSKNIVLMAYGKEKAEAIKGMVEGEVTTELPASILQNHANVTVIADEAAVSLLSK.

The Proton acceptor; for enolization step role is filled by aspartate 62. The active-site For ring-opening step is the asparagine 128. Residue histidine 130 is the Proton acceptor; for ring-opening step of the active site. The For ring-opening step role is filled by glutamate 135.

The protein belongs to the glucosamine/galactosamine-6-phosphate isomerase family. NagB subfamily.

It catalyses the reaction alpha-D-glucosamine 6-phosphate + H2O = beta-D-fructose 6-phosphate + NH4(+). It participates in amino-sugar metabolism; N-acetylneuraminate degradation; D-fructose 6-phosphate from N-acetylneuraminate: step 5/5. In terms of biological role, catalyzes the reversible isomerization-deamination of glucosamine 6-phosphate (GlcN6P) to form fructose 6-phosphate (Fru6P) and ammonium ion. The sequence is that of Glucosamine-6-phosphate deaminase from Lactococcus lactis subsp. cremoris (strain SK11).